We begin with the raw amino-acid sequence, 515 residues long: Membrane-bound transcription factor site-2 protease (515 aa).

Topologically, residues 1-3 (MIP) are cytoplasmic. Residues 4–24 (VSLLVVVVGGWTAVYLADLVL) traverse the membrane as a helical segment. Over 25–74 (KSSVYFKHSYEDWLENNGLSISPFHIRWQTSIFNRAFYSWGRRKARMLYQ) the chain is Lumenal. 2 helical membrane-spanning segments follow: residues 75-95 (WFNF…FLLG) and 96-107 (KTLMQTLAQMMA). The Lumenal portion of the chain corresponds to 108-140 (DSPSPYSSSSSSSSSSSSSSSSSSSLHNEQVLQ). The helical transmembrane segment at 141–165 (VVVPGINLPVNQLTYFFAAVLISGV) threads the bilayer. A Zn(2+)-binding site is contributed by H167. E168 is a catalytic residue. The next 3 helical transmembrane spans lie at 170-182 (GHGI…QVRF), 183-205 (NGFG…TTHL), and 225-247 (FVLA…PFYY). H171 provides a ligand contact to Zn(2+). At 248-442 (TGVGVLITEV…LPVIVETFVK (195 aa)) the chain is on the lumenal side. N-linked (GlcNAc...) asparagine glycosylation occurs at N333. A run of 2 helical transmembrane segments spans residues 443 to 460 (YLIS…VPCF) and 461 to 472 (ALDGQWILNSFL). At 473–488 (DATLTSVIGDNDVKDL) the chain is on the lumenal side. Residues 489-509 (IGFFILLGGSVLLAANVTLGL) traverse the membrane as a helical segment. Topologically, residues 510–515 (WMVTAR) are cytoplasmic.

It belongs to the peptidase M50A family. It depends on Zn(2+) as a cofactor.

It localises to the membrane. It is found in the cytoplasm. The protein localises to the golgi apparatus membrane. It catalyses the reaction Cleaves several transcription factors that are type-2 transmembrane proteins within membrane-spanning domains. Known substrates include sterol regulatory element-binding protein (SREBP) -1, SREBP-2 and forms of the transcriptional activator ATF6. SREBP-2 is cleaved at the site 477-DRSRILL-|-CVLTFLCLSFNPLTSLLQWGGA-505. The residues Asn-Pro, 11 residues distal to the site of cleavage in the membrane-spanning domain, are important for cleavage by S2P endopeptidase. Replacement of either of these residues does not prevent cleavage, but there is no cleavage if both of these residues are replaced.. In terms of biological role, zinc metalloprotease that mediates intramembrane proteolysis of proteins such as ATF6, ATF6B, SREBF1/SREBP1 and SREBF2/SREBP2. Catalyzes the second step in the proteolytic activation of the sterol regulatory element-binding proteins (SREBPs) SREBF1/SREBP1 and SREBF2/SREBP2: cleaves SREBPs within the first transmembrane segment, thereby releasing the N-terminal segment with a portion of the transmembrane segment attached. Mature N-terminal SREBP fragments shuttle to the nucleus and activate gene transcription. Also mediates the second step in the proteolytic activation of the cyclic AMP-dependent transcription factor ATF-6 (ATF6 and ATF6B). Involved in intramembrane proteolysis during bone formation. In astrocytes and osteoblasts, upon DNA damage and ER stress, mediates the second step of the regulated intramembrane proteolytic activation of the transcription factor CREB3L1, leading to the inhibition of cell-cycle progression. This Mus musculus (Mouse) protein is Membrane-bound transcription factor site-2 protease (Mbtps2).